Consider the following 119-residue polypeptide: MVQENKNFATAKAKSIRVSPRKLNLVAAFIRNMKVSEALVQLTFSPKRIAKVVKTCLQSAIANAENNLGLDIDRLVVTKATVGKALVMKRVMPRAKGRATRINKFFSNLYITVTEKEDN.

It belongs to the universal ribosomal protein uL22 family. As to quaternary structure, part of the 50S ribosomal subunit.

This protein binds specifically to 23S rRNA; its binding is stimulated by other ribosomal proteins, e.g. L4, L17, and L20. It is important during the early stages of 50S assembly. It makes multiple contacts with different domains of the 23S rRNA in the assembled 50S subunit and ribosome. Functionally, the globular domain of the protein is located near the polypeptide exit tunnel on the outside of the subunit, while an extended beta-hairpin is found that lines the wall of the exit tunnel in the center of the 70S ribosome. The protein is Large ribosomal subunit protein uL22 of Rickettsia canadensis (strain McKiel).